Reading from the N-terminus, the 380-residue chain is Oocyte-specific homeobox protein 4 (380 aa).

5 disordered regions span residues 1–25 (MSKD…SFLV), 43–95 (VTPT…RKCR), 152–182 (KSSQ…FAAS), 234–303 (PRQK…CQTP), and 339–380 (TRSK…SSAY). The span at 43 to 53 (VTPTRPLQSSH) shows a compositional bias: polar residues. Positions 54–67 (SVHERDLHQKDSQE) are enriched in basic and acidic residues. Residues 94–153 (CRKERTVYSKEQKCLLQEHFHQCQNPDLEQRKALALLIGVTEYKIQTWFKNRRAKECRKS) constitute a DNA-binding region (homeobox). Basic and acidic residues predominate over residues 234-250 (PRQKCRELSREPGHLSS). Low complexity predominate over residues 260-271 (SSPSPAAGAESS). Composition is skewed to polar residues over residues 278-302 (LSLS…MCQT) and 351-380 (NTVQ…SSAY).

It belongs to the paired homeobox family. Obox subfamily. Specifically expressed in early embryos.

The protein localises to the nucleus. In terms of biological role, transcription factor required for zygotic genome activation (ZGA), a critical event in early embryonic development during which the developmental control passes from maternally provided mRNAs to the expression of the zygotic genome after fertilization. Cannot compensate for loss of other members of the Obox family, suggesting that its function differs from other Obox family members. May regulate expression of histone genes in embryonic stem cells. Also involved in completion of meiosis of oocytes during the meiosis-I/meiosis-II transition. Required to maintain the nuclear membrane of the germinal vesicle in oocytes. The polypeptide is Oocyte-specific homeobox protein 4 (Mus musculus (Mouse)).